Reading from the N-terminus, the 397-residue chain is Ribosomal RNA large subunit methyltransferase I (397 aa).

In terms of domain architecture, PUA spans 2–80 (SAAIYLVKGR…QDINRAFFVK (79 aa)).

It belongs to the methyltransferase superfamily. RlmI family.

The protein localises to the cytoplasm. The catalysed reaction is cytidine(1962) in 23S rRNA + S-adenosyl-L-methionine = 5-methylcytidine(1962) in 23S rRNA + S-adenosyl-L-homocysteine + H(+). Its function is as follows. Specifically methylates the cytosine at position 1962 (m5C1962) of 23S rRNA. The protein is Ribosomal RNA large subunit methyltransferase I of Vibrio vulnificus (strain CMCP6).